The following is a 202-amino-acid chain: Cutinase (202 aa).

Residues 1 to 20 form the signal peptide; sequence MKTSAQQLLSALLLPLSVLA. A disulfide bridge connects residues cysteine 31 and cysteine 106. The active-site Nucleophile is the serine 117. Cysteine 165 and cysteine 172 are disulfide-bonded. Aspartate 169 is a catalytic residue. Catalysis depends on histidine 182, which acts as the Proton donor/acceptor.

Belongs to the cutinase family. In terms of processing, the 2 disulfide bonds play a critical role in holding the catalytic residues in juxta-position; reduction of the disulfide bridges results in the complete inactivation of the enzyme.

Its subcellular location is the secreted. The catalysed reaction is cutin + H2O = cutin monomers.. Functionally, catalyzes the hydrolysis of complex carboxylic polyesters found in the cell wall of plants. Degrades cutin, a macromolecule that forms the structure of the plant cuticle. Allows pathogenic fungi to penetrate through the cuticular barrier into the host plant during the initial stage of fungal infection. This Botryotinia fuckeliana (Noble rot fungus) protein is Cutinase.